A 273-amino-acid polypeptide reads, in one-letter code: GATA-type zinc finger protein 1 (273 aa).

Disordered regions lie at residues 99 to 143 and 172 to 201; these read RDSK…ERVD and SSRS…AGSE. The GATA-type zinc-finger motif lies at 208-232; it reads CASCRTQRTPLWRDAEDGTPLCNAC.

The protein resides in the nucleus. Its function is as follows. Transcriptional regulator that plays a key role in germ cell development. Determines the oogenic fate by activating key genes for the oogenic program and meiotic prophase entry. Acts downstream of bone morphogenetic protein (BMP) by regulating expression of genes required for the oogenic programs, which are repressed by Polycomb activities in sexually uncommitted germ cells. Regulates expression of STRA8, a central downstream effector for the meiotic program. Acts independently of retinoic acid (RA). In males, not required for germ-cell sex determination, but required to allow the spermatogonia to efficiently accomplish the meiotic prophase. The protein is GATA-type zinc finger protein 1 of Homo sapiens (Human).